The following is a 678-amino-acid chain: Glycine--tRNA ligase beta subunit (678 aa).

The protein belongs to the class-II aminoacyl-tRNA synthetase family. Tetramer of two alpha and two beta subunits.

It is found in the cytoplasm. It catalyses the reaction tRNA(Gly) + glycine + ATP = glycyl-tRNA(Gly) + AMP + diphosphate. In Streptococcus pneumoniae (strain Taiwan19F-14), this protein is Glycine--tRNA ligase beta subunit.